A 520-amino-acid polypeptide reads, in one-letter code: Laccase-1 (520 aa).

Residues 1 to 19 (MRLSNALVLVAACISSVVA) form the signal peptide. 3 consecutive Plastocyanin-like domains span residues 21–145 (TRTF…FIVY), 157–305 (VDDE…LTLA), and 375–488 (TVPV…FAEA). 2 residues coordinate Cu cation: H82 and H84. 2 cysteine pairs are disulfide-bonded: C103-C509 and C135-C229. N108 carries an N-linked (GlcNAc...) asparagine glycan. Positions 127 and 129 each coordinate Cu cation. N239 and N299 each carry an N-linked (GlcNAc...) asparagine glycan. 7 residues coordinate Cu cation: H417, H420, H422, H470, C471, H472, and H476. N-linked (GlcNAc...) asparagine glycosylation occurs at N492.

Belongs to the multicopper oxidase family. It depends on Cu cation as a cofactor.

Its subcellular location is the secreted. The catalysed reaction is 4 hydroquinone + O2 = 4 benzosemiquinone + 2 H2O. In terms of biological role, lignin degradation and detoxification of lignin-derived products. The polypeptide is Laccase-1 (lcc1) (Agaricus bisporus (White button mushroom)).